A 284-amino-acid chain; its full sequence is RNase adapter protein RapZ (284 aa).

8–15 (GRSGSGKS) provides a ligand contact to ATP. 56-59 (DVRN) contributes to the GTP binding site. Positions 266–284 (RARGKNVQSRHRTLEKRKQ) are RNA-binding.

The protein belongs to the RapZ-like family. RapZ subfamily. In terms of assembly, homotrimer.

In terms of biological role, modulates the synthesis of GlmS, by affecting the processing and stability of the regulatory small RNA GlmZ. When glucosamine-6-phosphate (GlcN6P) concentrations are high in the cell, RapZ binds GlmZ and targets it to cleavage by RNase E. Consequently, GlmZ is inactivated and unable to activate GlmS synthesis. Under low GlcN6P concentrations, RapZ is sequestered and inactivated by an other regulatory small RNA, GlmY, preventing GlmZ degradation and leading to synthesis of GlmS. The protein is RNase adapter protein RapZ of Yersinia pseudotuberculosis serotype O:1b (strain IP 31758).